Consider the following 305-residue polypeptide: Methionyl-tRNA formyltransferase (305 aa).

110-113 (SLLP) is a (6S)-5,6,7,8-tetrahydrofolate binding site.

The protein belongs to the Fmt family.

It carries out the reaction L-methionyl-tRNA(fMet) + (6R)-10-formyltetrahydrofolate = N-formyl-L-methionyl-tRNA(fMet) + (6S)-5,6,7,8-tetrahydrofolate + H(+). Functionally, attaches a formyl group to the free amino group of methionyl-tRNA(fMet). The formyl group appears to play a dual role in the initiator identity of N-formylmethionyl-tRNA by promoting its recognition by IF2 and preventing the misappropriation of this tRNA by the elongation apparatus. This is Methionyl-tRNA formyltransferase from Ureaplasma parvum serovar 3 (strain ATCC 700970).